We begin with the raw amino-acid sequence, 695 residues long: NAD(P)H-quinone oxidoreductase subunit 5, chloroplastic (695 aa).

15 helical membrane passes run 1–21 (WIIP…LILF), 32–52 (WAFQ…YLSI), 81–101 (IDPL…MVLI), 117–137 (FAYM…SNLI), 139–159 (IYIF…FWFT), 177–197 (GDFG…SFEF), 211–231 (NEVN…GAVA), 250–270 (TPIS…FLVA), 278–298 (VIPY…LLGA), 319–339 (LGYM…FHLI), 346–366 (ALLF…VGYS), 388–408 (ITFL…CFWS), 417–437 (WLYS…TAFY), 535–555 (LFPI…GIPF), and 594–614 (VLSV…YKPI).

It belongs to the complex I subunit 5 family. NDH is composed of at least 16 different subunits, 5 of which are encoded in the nucleus.

Its subcellular location is the plastid. The protein resides in the chloroplast thylakoid membrane. It carries out the reaction a plastoquinone + NADH + (n+1) H(+)(in) = a plastoquinol + NAD(+) + n H(+)(out). The catalysed reaction is a plastoquinone + NADPH + (n+1) H(+)(in) = a plastoquinol + NADP(+) + n H(+)(out). Functionally, NDH shuttles electrons from NAD(P)H:plastoquinone, via FMN and iron-sulfur (Fe-S) centers, to quinones in the photosynthetic chain and possibly in a chloroplast respiratory chain. The immediate electron acceptor for the enzyme in this species is believed to be plastoquinone. Couples the redox reaction to proton translocation, and thus conserves the redox energy in a proton gradient. This Capsicum baccatum (Peruvian pepper) protein is NAD(P)H-quinone oxidoreductase subunit 5, chloroplastic (ndhF).